The sequence spans 254 residues: 3-deoxy-manno-octulosonate cytidylyltransferase (254 aa).

It belongs to the KdsB family.

It localises to the cytoplasm. The catalysed reaction is 3-deoxy-alpha-D-manno-oct-2-ulosonate + CTP = CMP-3-deoxy-beta-D-manno-octulosonate + diphosphate. Its pathway is nucleotide-sugar biosynthesis; CMP-3-deoxy-D-manno-octulosonate biosynthesis; CMP-3-deoxy-D-manno-octulosonate from 3-deoxy-D-manno-octulosonate and CTP: step 1/1. It participates in bacterial outer membrane biogenesis; lipopolysaccharide biosynthesis. Its function is as follows. Activates KDO (a required 8-carbon sugar) for incorporation into bacterial lipopolysaccharide in Gram-negative bacteria. The polypeptide is 3-deoxy-manno-octulosonate cytidylyltransferase (Chlamydia trachomatis serovar L2 (strain ATCC VR-902B / DSM 19102 / 434/Bu)).